A 228-amino-acid polypeptide reads, in one-letter code: Isoprenyl transferase (228 aa).

Asp9 is an active-site residue. Asp9 contributes to the Mg(2+) binding site. Residues 10–13, Trp14, Arg22, His26, and 54–56 contribute to the substrate site; these read GNGR and STE. Asn57 (proton acceptor) is an active-site residue. Substrate contacts are provided by residues Trp58, Arg60, Arg175, and 181 to 183; that span reads RMS. Mg(2+) is bound at residue Glu194.

Belongs to the UPP synthase family. In terms of assembly, homodimer. Mg(2+) serves as cofactor.

Catalyzes the condensation of isopentenyl diphosphate (IPP) with allylic pyrophosphates generating different type of terpenoids. The sequence is that of Isoprenyl transferase from Treponema pallidum (strain Nichols).